We begin with the raw amino-acid sequence, 308 residues long: Oxygen-dependent coproporphyrinogen-III oxidase (308 aa).

Residue Ser-94 participates in substrate binding. A divalent metal cation contacts are provided by His-98 and His-108. His-108 functions as the Proton donor in the catalytic mechanism. Residue 110-112 (NVR) coordinates substrate. Residues His-147 and His-177 each coordinate a divalent metal cation. An important for dimerization region spans residues 242-277 (YVEFNLVWDRGTLFGLQTGGRTESILMSMPPLVRWE). A substrate-binding site is contributed by 260–262 (GGR).

Belongs to the aerobic coproporphyrinogen-III oxidase family. Homodimer. The cofactor is a divalent metal cation.

The protein resides in the cytoplasm. The catalysed reaction is coproporphyrinogen III + O2 + 2 H(+) = protoporphyrinogen IX + 2 CO2 + 2 H2O. The protein operates within porphyrin-containing compound metabolism; protoporphyrin-IX biosynthesis; protoporphyrinogen-IX from coproporphyrinogen-III (O2 route): step 1/1. Functionally, involved in the heme biosynthesis. Catalyzes the aerobic oxidative decarboxylation of propionate groups of rings A and B of coproporphyrinogen-III to yield the vinyl groups in protoporphyrinogen-IX. The protein is Oxygen-dependent coproporphyrinogen-III oxidase of Yersinia enterocolitica serotype O:8 / biotype 1B (strain NCTC 13174 / 8081).